The sequence spans 220 residues: uncharacterized protein (220 aa).

A helical transmembrane segment spans residues 10 to 30; it reads FFIIGGVILSIGLILFFLLGF.

It is found in the membrane. This is an uncharacterized protein from Methanocaldococcus jannaschii (strain ATCC 43067 / DSM 2661 / JAL-1 / JCM 10045 / NBRC 100440) (Methanococcus jannaschii).